The sequence spans 154 residues: MAASGITSLPALPEDGGAAFPPGHFKDPKRLYCKNGGFFLRIHPDGRVDGVREKSDPHVKLQLQAEERGVVSIKGVCANRYLAMKEDGRLLASKCVTEECFFFERLESNNYNTYRSRKYSSWYVALKRTGQYKLGSKTGPGQKAILFLPMSAKS.

The propeptide occupies Met-1–Leu-9. Asn-35 contacts heparin. Tyr-81 is subject to Phosphotyrosine; by TEC. Lys-94 is covalently cross-linked (Glycyl lysine isopeptide (Lys-Gly) (interchain with G-Cter in SUMO1)). Positions Lys-127–Lys-143 are heparin-binding.

It belongs to the heparin-binding growth factors family. In terms of assembly, monomer. Homodimer. Interacts with FGFR1, FGFR2, FGFR3 and FGFR4. Affinity between fibroblast growth factors (FGFs) and their receptors is increased by heparan sulfate glycosaminoglycans that function as coreceptors. Interacts with CSPG4, FGFBP1 and TEC. Found in a complex with FGFBP1, FGF1 and FGF2. Interacts with FGFBP3. Interacts with integrin ITGAV:ITGB3; the interaction is required for FGF2 signaling. Interacts with SNORC (via the extracellular domain). Interacts with glypican GPC3. Phosphorylation at Tyr-81 regulates FGF2 unconventional secretion.

Its subcellular location is the secreted. It is found in the nucleus. Its function is as follows. Acts as a ligand for FGFR1, FGFR2, FGFR3 and FGFR4. Also acts as an integrin ligand which is required for FGF2 signaling. Binds to integrin ITGAV:ITGB3. Plays an important role in the regulation of cell survival, cell division, cell differentiation and cell migration. Functions as a potent mitogen in vitro. Can induce angiogenesis. Mediates phosphorylation of ERK1/2 and thereby promotes retinal lens fiber differentiation. The chain is Fibroblast growth factor 2 (Fgf2) from Mus musculus (Mouse).